We begin with the raw amino-acid sequence, 255 residues long: Putative cysteine-rich repeat secretory protein 27 (255 aa).

The first 26 residues, 1–26, serve as a signal peptide directing secretion; that stretch reads MISKFGSVHILAVVAIQLLIIPSVSS. Gnk2-homologous domains follow at residues 33–135 and 141–252; these read YLHH…TINS and YEND…LYPF.

It belongs to the cysteine-rich repeat secretory protein family.

The protein localises to the secreted. In Arabidopsis thaliana (Mouse-ear cress), this protein is Putative cysteine-rich repeat secretory protein 27 (CRRSP27).